The following is a 538-amino-acid chain: Histone-arginine methyltransferase CARMER (538 aa).

In terms of domain architecture, SAM-dependent MTase PRMT-type spans 148–457 (ASQYFQFYGY…QSYDVTIDLH (310 aa)). The S-adenosyl-L-methionine site is built by Q161, R170, G194, E216, E245, and T273. The residue at position 508 (R508) is an Asymmetric dimethylarginine; by autocatalysis.

The protein belongs to the class I-like SAM-binding methyltransferase superfamily. Protein arginine N-methyltransferase family. Homodimer. In terms of processing, the dimethylated protein is the major form.

Its subcellular location is the cytoplasm. It localises to the nucleus. It catalyses the reaction L-arginyl-[protein] + 2 S-adenosyl-L-methionine = N(omega),N(omega)-dimethyl-L-arginyl-[protein] + 2 S-adenosyl-L-homocysteine + 2 H(+). Methylates (mono- and asymmetric dimethylation) the guanidino nitrogens of arginyl residues in proteins. May methylate histone H3 at 'Arg-17' and activate transcription via chromatin remodeling. The sequence is that of Histone-arginine methyltransferase CARMER (Art4) from Drosophila virilis (Fruit fly).